The primary structure comprises 301 residues: MLTFQQIILKLQSYWADKGCALLQPYDMEVGAGTSHTATFLRALGPEPWKAAYVQPSRRPKDGRYGENPNRLQHYYQYQVVLKPAPSNILELYLGSLEALGFDLKKNDIRFVEDDWENPTLGAWGLGWEVWLNGMEVTQFTYFQQVGGIDCKPITGEITYGLERLAMYLQGVDNVYNLTWTDGLSYGDVYKQNEVEQSTYNFEHSDAEFLFTAFAAHEKQARHLMTEQLALPAYEQVLKAAHSFNLLDARGAISVTERAAYIGRIRNLARSVAQSYYESRQRLGFPMAPREWVAQITKKAA.

It belongs to the class-II aminoacyl-tRNA synthetase family. In terms of assembly, tetramer of two alpha and two beta subunits.

It is found in the cytoplasm. It carries out the reaction tRNA(Gly) + glycine + ATP = glycyl-tRNA(Gly) + AMP + diphosphate. The polypeptide is Glycine--tRNA ligase alpha subunit (Variovorax paradoxus (strain S110)).